We begin with the raw amino-acid sequence, 323 residues long: tRNA U34 carboxymethyltransferase (323 aa).

Carboxy-S-adenosyl-L-methionine is bound by residues lysine 91, tryptophan 105, lysine 110, glycine 130, 152 to 154 (DPT), 181 to 182 (IE), methionine 196, tyrosine 200, and arginine 315.

Belongs to the class I-like SAM-binding methyltransferase superfamily. CmoB family. Homotetramer.

The catalysed reaction is carboxy-S-adenosyl-L-methionine + 5-hydroxyuridine(34) in tRNA = 5-carboxymethoxyuridine(34) in tRNA + S-adenosyl-L-homocysteine + H(+). Functionally, catalyzes carboxymethyl transfer from carboxy-S-adenosyl-L-methionine (Cx-SAM) to 5-hydroxyuridine (ho5U) to form 5-carboxymethoxyuridine (cmo5U) at position 34 in tRNAs. The sequence is that of tRNA U34 carboxymethyltransferase from Shigella flexneri serotype 5b (strain 8401).